The primary structure comprises 252 residues: MNLNKQVAIVTGGASGFGAAIARRLSQAGAAVLVADLNAEGAQRMATELNAAGGRALGMACDVSKEADYRAVVDAAIAQLGGLHIVVNNAGTTHRNKPALAVTEDEFDRVYRVNLKSVYWSAQCALPHFAQQGHGVMVNVASTTGVRPGPGLTWYSGSKAAMINLTKGLALEFARSGVRINAVNPMIGETPMMADFMGMEDTPANRERFLSRIPLGRFTRPDDVASAVAFLASDDASFLTGVCLDVDGGRNI.

Residues 9–36 (IVTG…LVAD) and D62 each bind NAD(+). S142 contacts substrate. The active-site Proton acceptor is Y155. K159 contributes to the NAD(+) binding site.

The protein belongs to the short-chain dehydrogenases/reductases (SDR) family. As to quaternary structure, homodimer.

The enzyme catalyses 4-formylbenzenesulfonate + NAD(+) + H2O = 4-sulfobenzoate + NADH + 2 H(+). Involved in the toluene-4-sulfonate degradation pathway. Does not discriminate between the sulfonate and the carboxyl substituents and can also be involved in the p-toluenecarboxylate degradation pathway. The protein is 4-formylbenzenesulfonate dehydrogenase TsaC1/TsaC2 (tsaC1) of Comamonas testosteroni (Pseudomonas testosteroni).